The following is a 407-amino-acid chain: (R)-phenyllactyl-CoA dehydratase alpha subunit (407 aa).

A propeptide spanning residues 1-4 (MSDR) is cleaved from the precursor.

This sequence belongs to the FldB/FldC dehydratase alpha/beta subunit family. In terms of assembly, part of the heterotrimeric phenyllactate dehydratase complex FldABC, composed of (R)-phenyllactate CoA-transferase (FldA) and a heterodimeric (R)-phenyllactyl-CoA dehydratase (FldB and FldC). It depends on [4Fe-4S] cluster as a cofactor. No flavin could be detected in the FldABC complex, and the addition of FAD, FMN or riboflavin to the dehydratase do not increase enzymatic activity. serves as cofactor.

The enzyme catalyses (R)-3-phenyllactoyl-CoA = (E)-cinnamoyl-CoA + H2O. It catalyses the reaction (R)-3-(4-hydroxyphenyl)lactoyl-CoA = (E)-4-coumaroyl-CoA + H2O. It carries out the reaction (R)-3-(indol-3-yl)lactoyl-CoA = (E)-3-(indol-3-yl)acryloyl-CoA + H2O. It participates in amino-acid degradation; L-phenylalanine degradation. Functionally, component of the phenyllactate dehydratase complex FldABC that is involved in the fermentation of L-phenylalanine via a Stickland reaction. This complex catalyzes the reversible syn-dehydration of (R)-phenyllactate to (E)-cinnamate in two steps, a CoA-transfer from cinnamoyl-CoA to phenyllactate, catalyzed by FldA, followed by the dehydration of phenyllactyl-CoA to cinnamoyl-CoA, catalyzed by FldB and FldC. Requires the activator FldI to initiate catalysis. This chain is (R)-phenyllactyl-CoA dehydratase alpha subunit, found in Clostridium sporogenes.